The chain runs to 629 residues: tRNA uridine 5-carboxymethylaminomethyl modification enzyme MnmG (629 aa).

FAD is bound at residue 13–18 (GGGHAG). NAD(+) is bound at residue 273-287 (GPRYCPSIEDKVVRF).

The protein belongs to the MnmG family. Homodimer. Heterotetramer of two MnmE and two MnmG subunits. FAD serves as cofactor.

The protein resides in the cytoplasm. Functionally, NAD-binding protein involved in the addition of a carboxymethylaminomethyl (cmnm) group at the wobble position (U34) of certain tRNAs, forming tRNA-cmnm(5)s(2)U34. The chain is tRNA uridine 5-carboxymethylaminomethyl modification enzyme MnmG from Nitrosococcus oceani (strain ATCC 19707 / BCRC 17464 / JCM 30415 / NCIMB 11848 / C-107).